A 712-amino-acid polypeptide reads, in one-letter code: Polyribonucleotide nucleotidyltransferase (712 aa).

Mg(2+) contacts are provided by aspartate 487 and aspartate 493. In terms of domain architecture, KH spans proline 554–isoleucine 613. Positions glycine 623–lysine 691 constitute an S1 motif domain.

This sequence belongs to the polyribonucleotide nucleotidyltransferase family. It depends on Mg(2+) as a cofactor.

It localises to the cytoplasm. It catalyses the reaction RNA(n+1) + phosphate = RNA(n) + a ribonucleoside 5'-diphosphate. In terms of biological role, involved in mRNA degradation. Catalyzes the phosphorolysis of single-stranded polyribonucleotides processively in the 3'- to 5'-direction. The protein is Polyribonucleotide nucleotidyltransferase of Bacillus cereus (strain AH820).